Consider the following 224-residue polypeptide: Casparian strip membrane protein 1 (224 aa).

The disordered stretch occupies residues 1 to 22 (MSSGEPAAVSIPIHDHHGKAPA). Residues 1–62 (MSSGEPAAVS…RGDHHRGSRC (62 aa)) lie on the Cytoplasmic side of the membrane. The chain crosses the membrane as a helical span at residues 63 to 83 (LAFLDFILRIAAFGPALAAAI). The Extracellular segment spans residues 84–110 (STGTSDETLSVFTEFYQFRARFDDFPA). The helical transmembrane segment at 111–131 (FLFFLVANAIVAGYLVLSLPF) threads the bilayer. The Cytoplasmic segment spans residues 132 to 145 (SAVLVIRPQTIGLR). The helical transmembrane segment at 146 to 166 (LLLLVCDMIMAAMLTAAASAA) threads the bilayer. Residues 167 to 200 (AAIVDLAHNGNLRANWVAICMQFHGFCQRTSGSV) are Extracellular-facing. A helical transmembrane segment spans residues 201–221 (VASFLTVVILMFLVILAACSI). Over 222–224 (RKR) the chain is Cytoplasmic.

Belongs to the Casparian strip membrane proteins (CASP) family. In terms of assembly, homodimer and heterodimers.

It is found in the cell membrane. Functionally, regulates membrane-cell wall junctions and localized cell wall deposition. Required for establishment of the Casparian strip membrane domain (CSD) and the subsequent formation of Casparian strips, a cell wall modification of the root endodermis that determines an apoplastic barrier between the intraorganismal apoplasm and the extraorganismal apoplasm and prevents lateral diffusion. The chain is Casparian strip membrane protein 1 from Oryza sativa subsp. indica (Rice).